Consider the following 443-residue polypeptide: Probable glycine dehydrogenase (decarboxylating) subunit 1 (443 aa).

This sequence belongs to the GcvP family. N-terminal subunit subfamily. The glycine cleavage system is composed of four proteins: P, T, L and H. In this organism, the P 'protein' is a heterodimer of two subunits.

It carries out the reaction N(6)-[(R)-lipoyl]-L-lysyl-[glycine-cleavage complex H protein] + glycine + H(+) = N(6)-[(R)-S(8)-aminomethyldihydrolipoyl]-L-lysyl-[glycine-cleavage complex H protein] + CO2. In terms of biological role, the glycine cleavage system catalyzes the degradation of glycine. The P protein binds the alpha-amino group of glycine through its pyridoxal phosphate cofactor; CO(2) is released and the remaining methylamine moiety is then transferred to the lipoamide cofactor of the H protein. The chain is Probable glycine dehydrogenase (decarboxylating) subunit 1 from Oleidesulfovibrio alaskensis (strain ATCC BAA-1058 / DSM 17464 / G20) (Desulfovibrio alaskensis).